A 759-amino-acid chain; its full sequence is DNA topoisomerase 3 (759 aa).

A Toprim domain is found at 3-147 (RALFVAEKND…RLDIFRARFS (145 aa)). Positions 165 to 590 (DEKTVAAVDC…EQIGKYRAIF (426 aa)) constitute a Topo IA-type catalytic domain. The active-site O-(5'-phospho-DNA)-tyrosine intermediate is Tyr-334. The segment at 609-715 (DKNNQAGGGP…KEQEEEEEVF (107 aa)) is disordered. Residues 614–639 (AGGGPGGPGGGGGPPRGPGGGGGGGP) show a composition bias toward gly residues. Positions 640-649 (TGPPAPPKPP) are enriched in pro residues. Zn(2+) contacts are provided by Cys-716, Cys-718, Cys-743, and Cys-753. Residues 716 to 759 (CQCPEPMRAVTKVVQKEGPNKGKKFYTCSLPYTSSEKCNFFKWA) form a GRF-type zinc finger.

The protein belongs to the type IA topoisomerase family. In terms of assembly, component of the BTR double Holliday Junction dissolution complex composed of at least him-6, top-3, rmh-1 and rmif-2, which is involved in double strand break repair in the germline. May interact with rmh-1.

Its subcellular location is the nucleus. It catalyses the reaction ATP-independent breakage of single-stranded DNA, followed by passage and rejoining.. Functionally, component of the BTR double Holliday Junction dissolution complex, which is involved in homologous recombination during meiotic double strand break in the germline. Releases the supercoiling and torsional tension of DNA introduced during the DNA replication and transcription by transiently cleaving and rejoining one strand of the DNA duplex. Introduces a single-strand break via transesterification at a target site in duplex DNA. The scissile phosphodiester is attacked by the catalytic tyrosine of the enzyme, resulting in the formation of a DNA-(5'-phosphotyrosyl)-enzyme intermediate and the expulsion of a 3'-OH DNA strand. The free DNA strand than undergoes passage around the unbroken strand thus removing DNA supercoils. Finally, in the religation step, the DNA 3'-OH attacks the covalent intermediate to expel the active-site tyrosine and restore the DNA phosphodiester backbone. This chain is DNA topoisomerase 3, found in Caenorhabditis elegans.